The sequence spans 289 residues: Probable aquaporin PIP2-6 (289 aa).

Met-1 bears the N-acetylmethionine mark. At 1–38 the chain is on the cytoplasmic side; it reads MTKDELTEEESLSGKDYLDPPPVKTFEVRELKKWSFYR. Thr-7 is modified (phosphothreonine). Ser-11 is subject to Phosphoserine. Residues 39–59 traverse the membrane as a helical segment; the sequence is AVIAEFIATLLFLYVTVLTVI. The Extracellular segment spans residues 60 to 80; the sequence is GFKSQTDINAGGGACASVGLL. A helical transmembrane segment spans residues 81–101; it reads GISWAFGGMIFILVYCTAGIS. The Cytoplasmic segment spans residues 102-124; sequence GGHINPAVTFGLFLASKVSLVRA. The NPA 1 motif lies at 106 to 108; the sequence is NPA. Residues 125–145 traverse the membrane as a helical segment; that stretch reads VSYMVAQCLGATCGVGLVKVF. At 146–165 the chain is on the extracellular side; it reads QSTYYNRYGGGANMLSDGYN. Residues 166–186 traverse the membrane as a helical segment; that stretch reads VGVGVGAEIIGTFVLVYTVFS. The Cytoplasmic portion of the chain corresponds to 187-200; that stretch reads ATDPKRNARDSHIP. The chain crosses the membrane as a helical span at residues 201-221; that stretch reads VLAPLPIGFSVFMVHLATIPI. At 222-248 the chain is on the extracellular side; it reads TGTGINPARSFGAAVIYNNQKAWDDQW. The NPA 2 signature appears at 227-229; the sequence is NPA. A helical transmembrane segment spans residues 249–269; sequence IFWVGPFVGAAIAAFYHQFVL. The Cytoplasmic portion of the chain corresponds to 270 to 289; sequence RAGAMKAYGSVRSQLHELHA. 2 positions are modified to phosphoserine: Ser-279 and Ser-282.

This sequence belongs to the MIP/aquaporin (TC 1.A.8) family. PIP (TC 1.A.8.11) subfamily. Expressed above ground, and in flower buds.

It localises to the cell membrane. Aquaporins facilitate the transport of water and small neutral solutes across cell membranes. The polypeptide is Probable aquaporin PIP2-6 (PIP2-6) (Arabidopsis thaliana (Mouse-ear cress)).